The following is a 282-amino-acid chain: Predicted GPI-anchored protein 23 (282 aa).

The signal sequence occupies residues M1–A18. The tract at residues G163–M264 is disordered. 3 N-linked (GlcNAc...) asparagine glycosylation sites follow: N180, N192, and N257. Residues G186–S216 show a composition bias toward gly residues. The segment covering L236–M264 has biased composition (low complexity). S259 carries GPI-anchor amidated serine lipidation. The propeptide at S260–I282 is removed in mature form.

Its subcellular location is the cell membrane. In terms of biological role, probable cell surface protein involved in the process of adhesion and early events of invasion. This is Predicted GPI-anchored protein 23 (PGA23) from Candida albicans (strain SC5314 / ATCC MYA-2876) (Yeast).